The following is a 1638-amino-acid chain: ATP-dependent helicase brm (1638 aa).

2 disordered regions span residues 1 to 137 (MASP…SQEN) and 201 to 387 (QMQQ…GMPM). Residues 7–51 (ANSPMPPPQAPSPMAPPSQSPAPSPHSPYPHQQPGPLQGPPPPGH) are compositionally biased toward pro residues. Residues 52–63 (PGAYGHPMQHGP) are compositionally biased toward low complexity. The span at 121 to 131 (GGPPGGPPPPE) shows a compositional bias: pro residues. A QLQ domain is found at 173-208 (HLNGNQVNLLRTQITAYRLLARNKPISMQMQQALQA). Over residues 201–211 (QMQQALQAAQQ) the composition is skewed to low complexity. 4 stretches are compositionally biased toward pro residues: residues 212-231 (QPPP…PPPG), 238-253 (PPVP…PSAG), 263-272 (ASNPYGPPVP), and 279-304 (APPP…PPPI). Low complexity-rich tracts occupy residues 305-317 (QQQQ…QQQS) and 365-382 (PGSQ…QVPP). Positions 501–573 (QKLEAERKRR…EKERMRRLMA (73 aa)) constitute an HSA domain. Residues 691 to 730 (DEEDSCGSNDDHKPKVEEQPTATEDATDKAQATGNDEDAK) are disordered. 2 positions are modified to phosphoserine: Ser-695 and Ser-698. Residues 699–708 (NDDHKPKVEE) show a composition bias toward basic and acidic residues. A compositionally biased stretch (polar residues) spans 710–724 (PTATEDATDKAQATG). In terms of domain architecture, Helicase ATP-binding spans 785-950 (VSLYNNNLNG…WALLNFLLPS (166 aa)). Residue 798-805 (DEMGLGKT) coordinates ATP. The DEGH box motif lies at 900 to 903 (DEGH). Residues 1102 to 1263 (LLDRILPKLK…QKSTGSERQQ (162 aa)) enclose the Helicase C-terminal domain. Residues 1380–1391 (DGAEFDEEEEED) are compositionally biased toward acidic residues. Residues 1380–1412 (DGAEFDEEEEEDDSKRKRRKRKNRKEESDDDSL) are disordered. 2 positions are modified to phosphoserine: Ser-1407 and Ser-1411. Residues 1425 to 1530 (RSKKQMHKIM…KVFVGARQRI (106 aa)) form the Bromo domain. A disordered region spans residues 1544–1578 (NTGEAHGNGGSDNSDNDDDDGGDDGSDDEEIATTS). Positions 1557–1574 (SDNDDDDGGDDGSDDEEI) are enriched in acidic residues. A phosphoserine mark is found at Ser-1591 and Ser-1594. The span at 1592 to 1604 (LASAPATPTQSSS) shows a compositional bias: low complexity. The disordered stretch occupies residues 1592–1638 (LASAPATPTQSSSNVSSGAATTSKKQTRRKRSQKKYTISDDDDDDMD). A compositionally biased stretch (basic residues) spans 1616-1625 (KQTRRKRSQK).

In terms of assembly, component of the Brahma complex, which is composed of brm, osa, mor, Snr1/Bap45, dalao/Bap111, Bap55, Bap60 and Act42A/Bap47. Interacts with asf1. Associates with the brm-HDAC3-erm repressor complex, composed of brm, HDAC3 and erm. Interacts with erm and HDAC3.

Its subcellular location is the nucleus. It catalyses the reaction ATP + H2O = ADP + phosphate + H(+). Its function is as follows. Transcriptional regulator. Acts as a coactivator, assisting one or more dedicated transcriptional activators of ANTC and BXC homeotic gene clusters. Can counteract the repressive effect of Polycomb protein. ATPase subunit of the Brahma complex, a multiprotein complex which is the equivalent of the yeast SWI/SNF complex and acts by remodeling the chromatin by catalyzing an ATP-dependent alteration in the structure of nucleosomal DNA. This complex can both serve as a transcriptional coactivator or corepressor, depending on the context. In type II neuroblast lineage, as part of the Brm remodeling complex, suppresses the formation of ectopic neuroblasts probably through interaction with erm and HDAC3. The protein is ATP-dependent helicase brm (brm) of Drosophila melanogaster (Fruit fly).